A 441-amino-acid polypeptide reads, in one-letter code: MDTFLYTSESVNEGHPDKLCDQISDAVLDACLEQDPDSKVACETCSKTNMVMVFGEITTKANVDYEKIVHKTCRDIGFVSDDVGLDADNCKVLVQIEQQSPDIAQGVHGHLTKRPEDIGAGDQGHMFGYATDETPELMPLSHVLATKLGAKLTEVRKNGTCPWLRPDGKTQVTVEYYNDKGAMVPIRVHTVLISTQHDETVTNDEIAADLKEHVIKPIIPAKYLDEKTIFHLNPSGRFVIGGPHGDAGLTGRKIIIDTYGGWGAHGGGAFSGKDPTKVDRSGAYIVRQAAKSIVASGLARRCIVQVSYAIGVPEPLSVFVDSYGTGKIPDREILQIVKETFDFRPGMISINLDLKRGGNGRFLKTAAYGHFGTGKIPDREILKIVKETFDFRPGMISINLDLKRGGNGRFLKTAAYGHFGRDDPDFTWEVVKPLKWEKPQA.

A Mg(2+)-binding site is contributed by Glu9. Residue His15 coordinates ATP. Glu43 contacts K(+). Residues Glu56 and Gln99 each coordinate L-methionine. Residues 167–169 (DGK), 235–238 (SGRF), Asp246, 252–253 (RK), Ala269, Lys273, and Lys277 contribute to the ATP site. Residue Asp246 coordinates L-methionine. An L-methionine-binding site is contributed by Lys277.

It belongs to the AdoMet synthase family. As to quaternary structure, homotetramer. It depends on Mn(2+) as a cofactor. Mg(2+) serves as cofactor. Co(2+) is required as a cofactor. Requires K(+) as cofactor.

It is found in the cytoplasm. The catalysed reaction is L-methionine + ATP + H2O = S-adenosyl-L-methionine + phosphate + diphosphate. Its pathway is amino-acid biosynthesis; S-adenosyl-L-methionine biosynthesis; S-adenosyl-L-methionine from L-methionine: step 1/1. Catalyzes the formation of S-adenosylmethionine from methionine and ATP. The reaction comprises two steps that are both catalyzed by the same enzyme: formation of S-adenosylmethionine (AdoMet) and triphosphate, and subsequent hydrolysis of the triphosphate. This is S-adenosylmethionine synthase 1 (SAMS1) from Daucus carota (Wild carrot).